The following is a 1092-amino-acid chain: SUMO-specific isopeptidase USPL1 (1092 aa).

2 disordered regions span residues 145–168 and 185–207; these read VYDE…TADS and TKDP…EGCT. Polar residues-rich tracts occupy residues 148–163 and 197–206; these read ETSS…QNPI and GRPSPQNEGC. Residues 227-500 form the USP domain; it reads VQWKNAYALC…EIHIVIWERK (274 aa). Cys236 serves as the catalytic Nucleophile. The segment at 236-495 is SUMO-binding; it reads CWLDCILSAL…EVPASEIHIV (260 aa). The active-site Proton acceptor is His456. Disordered regions lie at residues 713-749, 797-859, and 904-930; these read LKPE…SLKE, GGFK…STSC, and AALM…GSPN. Positions 732-748 are enriched in polar residues; the sequence is ADSQTTTSKSLQNQSLK. A compositionally biased stretch (basic residues) spans 810–819; it reads HVSKKARKSA. The span at 821-832 shows a compositional bias: pro residues; sequence KPPPISKPPAGP. Ser909 carries the phosphoserine modification.

This sequence belongs to the peptidase C19 family. In terms of assembly, interacts with ELL.

Its subcellular location is the nucleus. It is found in the cajal body. In terms of biological role, SUMO-specific isopeptidase involved in protein desumoylation. Specifically binds SUMO proteins with a higher affinity for SUMO2 and SUMO3 which it cleaves more efficiently. Also able to process full-length SUMO proteins to their mature forms. Plays a key role in RNA polymerase-II-mediated snRNA transcription in the Cajal bodies. Is a component of complexes that can bind to U snRNA genes. This is SUMO-specific isopeptidase USPL1 (USPL1) from Homo sapiens (Human).